Consider the following 217-residue polypeptide: Pyrophosphatase PpaX (217 aa).

Asp11 functions as the Nucleophile in the catalytic mechanism.

It belongs to the HAD-like hydrolase superfamily. PpaX family. It depends on Mg(2+) as a cofactor.

The enzyme catalyses diphosphate + H2O = 2 phosphate + H(+). Its function is as follows. Hydrolyzes pyrophosphate formed during P-Ser-HPr dephosphorylation by HPrK/P. Might play a role in controlling the intracellular pyrophosphate pool. This chain is Pyrophosphatase PpaX, found in Listeria monocytogenes serotype 4a (strain HCC23).